Here is a 375-residue protein sequence, read N- to C-terminus: DNA replication and repair protein RecF (375 aa).

Gly-30 to Thr-37 provides a ligand contact to ATP.

Belongs to the RecF family.

The protein localises to the cytoplasm. Functionally, the RecF protein is involved in DNA metabolism; it is required for DNA replication and normal SOS inducibility. RecF binds preferentially to single-stranded, linear DNA. It also seems to bind ATP. The chain is DNA replication and repair protein RecF from Latilactobacillus sakei subsp. sakei (strain 23K) (Lactobacillus sakei subsp. sakei).